A 635-amino-acid chain; its full sequence is Threonine--tRNA ligase (635 aa).

The 61-residue stretch at 1-61 folds into the TGS domain; the sequence is MINISFPDGS…DNDCKFRILT (61 aa). Positions 242–533 are catalytic; the sequence is DHRKLGRELD…LIEEYAGRFP (292 aa). Zn(2+) contacts are provided by Cys-333, His-384, and His-510.

It belongs to the class-II aminoacyl-tRNA synthetase family. As to quaternary structure, homodimer. It depends on Zn(2+) as a cofactor.

The protein resides in the cytoplasm. It carries out the reaction tRNA(Thr) + L-threonine + ATP = L-threonyl-tRNA(Thr) + AMP + diphosphate + H(+). Its function is as follows. Catalyzes the attachment of threonine to tRNA(Thr) in a two-step reaction: L-threonine is first activated by ATP to form Thr-AMP and then transferred to the acceptor end of tRNA(Thr). Also edits incorrectly charged L-seryl-tRNA(Thr). The protein is Threonine--tRNA ligase of Rickettsia rickettsii (strain Sheila Smith).